The following is a 106-amino-acid chain: Glutaredoxin-1 (106 aa).

Residue Ala2 is modified to N-acetylalanine. A Glutaredoxin domain is found at 3-106 (QAFVNSKIQP…TRLKQMGALQ (104 aa)). N6-succinyllysine is present on Lys9. Disulfide bonds link Cys23/Cys26 and Cys79/Cys83.

Belongs to the glutaredoxin family.

The protein resides in the cytoplasm. Its function is as follows. Has a glutathione-disulfide oxidoreductase activity in the presence of NADPH and glutathione reductase. Reduces low molecular weight disulfides and proteins. The sequence is that of Glutaredoxin-1 (GLRX) from Bos taurus (Bovine).